The chain runs to 436 residues: UPF0597 protein YhaM (436 aa).

Belongs to the UPF0597 family.

The polypeptide is UPF0597 protein YhaM (Escherichia coli O139:H28 (strain E24377A / ETEC)).